Consider the following 938-residue polypeptide: AP-2 complex subunit alpha-2 (938 aa).

A 1,2-diacyl-sn-glycero-3-phospho-(1D-myo-inositol-3,4,5-trisphosphate) is bound by residues 11-12 (RG), lysine 43, tyrosine 53, and 57-61 (KYVCK). The segment at 616–677 (LKKKKGPSTV…APPVPAGPPP (62 aa)) is disordered. Low complexity predominate over residues 645–668 (PALASTSAVSTPSPSADLLGLGAA).

It belongs to the adaptor complexes large subunit family. In terms of assembly, adaptor protein complex 2 (AP-2) is a heterotetramer composed of two large adaptins (alpha-type subunit AP2A1 or AP2A2 and beta-type subunit AP2B1), a medium adaptin (mu-type subunit AP2M1) and a small adaptin (sigma-type subunit AP2S1). Binds clathrin. Binds EPN1, EPS15, AMPH, SNAP91 and BIN1. Interacts with HIP1. Interacts with DGKD. Interacts with DENND1A, DENND1B and DENND1C. Interacts with FCHO1. Interacts with ATAT1; this interaction is required for efficient alpha-tubulin acetylation by ATAT1. Interacts with KIAA1107. Together with AP2B1 and AP2M1, it interacts with ADAM10; this interaction facilitates ADAM10 endocytosis from the plasma membrane during long-term potentiation in hippocampal neurons. Interacts with CLN3 (via dileucine motif). Interacts with ABCB11; this interaction regulates cell membrane expression of ABCB11 through its internalization in a clathrin-dependent manner and its subsequent degradation. Interacts with DNAJC6.

The protein localises to the cell membrane. It is found in the membrane. It localises to the coated pit. Component of the adaptor protein complex 2 (AP-2). Adaptor protein complexes function in protein transport via transport vesicles in different membrane traffic pathways. Adaptor protein complexes are vesicle coat components and appear to be involved in cargo selection and vesicle formation. AP-2 is involved in clathrin-dependent endocytosis in which cargo proteins are incorporated into vesicles surrounded by clathrin (clathrin-coated vesicles, CCVs) which are destined for fusion with the early endosome. The clathrin lattice serves as a mechanical scaffold but is itself unable to bind directly to membrane components. Clathrin-associated adaptor protein (AP) complexes which can bind directly to both the clathrin lattice and to the lipid and protein components of membranes are considered to be the major clathrin adaptors contributing the CCV formation. AP-2 also serves as a cargo receptor to selectively sort the membrane proteins involved in receptor-mediated endocytosis. AP-2 seems to play a role in the recycling of synaptic vesicle membranes from the presynaptic surface. AP-2 recognizes Y-X-X-[FILMV] (Y-X-X-Phi) and [ED]-X-X-X-L-[LI] endocytosis signal motifs within the cytosolic tails of transmembrane cargo molecules. AP-2 may also play a role in maintaining normal post-endocytic trafficking through the ARF6-regulated, non-clathrin pathway. During long-term potentiation in hippocampal neurons, AP-2 is responsible for the endocytosis of ADAM10. The AP-2 alpha subunit binds polyphosphoinositide-containing lipids, positioning AP-2 on the membrane. The AP-2 alpha subunit acts via its C-terminal appendage domain as a scaffolding platform for endocytic accessory proteins. The AP-2 alpha and AP-2 sigma subunits are thought to contribute to the recognition of the [ED]-X-X-X-L-[LI] motif. The sequence is that of AP-2 complex subunit alpha-2 from Bos taurus (Bovine).